The chain runs to 92 residues: UPF0235 protein CCA_00247 (92 aa).

Belongs to the UPF0235 family.

This Chlamydia caviae (strain ATCC VR-813 / DSM 19441 / 03DC25 / GPIC) (Chlamydophila caviae) protein is UPF0235 protein CCA_00247.